Consider the following 794-residue polypeptide: Phenylalanine--tRNA ligase beta subunit (794 aa).

Positions Ser39 to Cys154 constitute a tRNA-binding domain. Residues Pro403 to Ala481 form the B5 domain. Mg(2+)-binding residues include Asp457, Asp463, Glu466, and Glu467. One can recognise an FDX-ACB domain in the interval Pro697–Asp793.

The protein belongs to the phenylalanyl-tRNA synthetase beta subunit family. Type 1 subfamily. Tetramer of two alpha and two beta subunits. Requires Mg(2+) as cofactor.

Its subcellular location is the cytoplasm. It catalyses the reaction tRNA(Phe) + L-phenylalanine + ATP = L-phenylalanyl-tRNA(Phe) + AMP + diphosphate + H(+). This is Phenylalanine--tRNA ligase beta subunit from Chlamydia abortus (strain DSM 27085 / S26/3) (Chlamydophila abortus).